A 321-amino-acid chain; its full sequence is L-carnitine dehydrogenase (321 aa).

14 to 19 serves as a coordination point for NAD(+); it reads GSGVIG.

It belongs to the 3-hydroxyacyl-CoA dehydrogenase family. L-carnitine dehydrogenase subfamily. Homodimer.

Its subcellular location is the cytoplasm. The catalysed reaction is carnitine + NAD(+) = 3-dehydrocarnitine + NADH + H(+). It functions in the pathway amine and polyamine metabolism; carnitine metabolism. Its activity is regulated as follows. Analogs of L-carnitine such as D-carnitine, glycine betaine and choline, are competitive inhibitors of L-carnitine oxidation. Its function is as follows. Catalyzes the NAD(+)-dependent oxidation of L-carnitine to 3-dehydrocarnitine. Is specific for L-carnitine and NAD(+) as substrates. D,L-3-hydroxybutyrate, L-lactate, ethanol, L-malate and D,L-isocitrate are not substrates. Is involved in a L-carnitine degradation pathway that allows P.aeruginosa to grow on L-carnitine as the sole source of carbon and nitrogen. This chain is L-carnitine dehydrogenase, found in Pseudomonas aeruginosa (strain ATCC 15692 / DSM 22644 / CIP 104116 / JCM 14847 / LMG 12228 / 1C / PRS 101 / PAO1).